Reading from the N-terminus, the 269-residue chain is Hydroxyethylthiazole kinase (269 aa).

Substrate is bound at residue M41. ATP is bound by residues R117 and S165. G192 is a substrate binding site.

This sequence belongs to the Thz kinase family. It depends on Mg(2+) as a cofactor.

It carries out the reaction 5-(2-hydroxyethyl)-4-methylthiazole + ATP = 4-methyl-5-(2-phosphooxyethyl)-thiazole + ADP + H(+). It functions in the pathway cofactor biosynthesis; thiamine diphosphate biosynthesis; 4-methyl-5-(2-phosphoethyl)-thiazole from 5-(2-hydroxyethyl)-4-methylthiazole: step 1/1. Its function is as follows. Catalyzes the phosphorylation of the hydroxyl group of 4-methyl-5-beta-hydroxyethylthiazole (THZ). The chain is Hydroxyethylthiazole kinase from Actinobacillus succinogenes (strain ATCC 55618 / DSM 22257 / CCUG 43843 / 130Z).